A 162-amino-acid polypeptide reads, in one-letter code: MEIPVPVQPSWLRRASAPLPGFSAPGRLFDQRFGEGLLEAELASLCPAAIAPYYLRAPSVALPTAQVSTDSGYFSVLLDVKHFLPEEISVKVVDDHVEVHARHEERPDEHGFIAREFHRRYRLPPGVDPAAVTSALSPEGVLSIQATPASAQAQLPSPPAAK.

Positions 1–72 (MEIPVPVQPS…PTAQVSTDSG (72 aa)) are involved in stabilization of the HSPB1:HSBP6 heterodimer. Serine 16 bears the Phosphoserine mark. Residues 56-162 (RAPSVALPTA…AQLPSPPAAK (107 aa)) form the sHSP domain. Glutamine 66 carries the post-translational modification Deamidated glutamine. Serine 157 carries the post-translational modification Phosphoserine.

Belongs to the small heat shock protein (HSP20) family. In terms of assembly, homodimer. Small heat shock proteins form high molecular mass oligomers containing variable number of monomers; these oligomers display a very flexible quaternary structure easily exchanging their subunits. Heterooligomer with HSPB1; formed through oligomerization of HSPB1:HSBP6 dimers; subunit exchange leads to formation of at least two different heterooligomeric complexes, differing in variable quantities of HSPB1 and HSPB6 homodimers in addition to HSPB1:HSPB6 heterodimers. Heterooligomer with CRYAB; large heterooligomers consist of CRYAB homodimers and HSPB5:HSPB6 heterodimers but lacking HSPB6 homodimers. Interacts with BAG3. Interacts (phosphorylated) with YWHAZ. Interacts with PDE4A and PDE4D; required for maintenance of the non-phosphorylated state of HSPB6 under basal conditions. Interacts with KDR. Interacts with PRKD1. Phosphorylated at Ser-16 by PKA and probably PKD1K; required to protect cardiomyocytes from apoptosis.

It is found in the cytoplasm. The protein localises to the nucleus. The protein resides in the secreted. In terms of biological role, small heat shock protein which functions as a molecular chaperone probably maintaining denatured proteins in a folding-competent state. Seems to have versatile functions in various biological processes. Plays a role in regulating muscle function such as smooth muscle vasorelaxation and cardiac myocyte contractility. May regulate myocardial angiogenesis implicating KDR. Overexpression mediates cardioprotection and angiogenesis after induced damage. Stabilizes monomeric YWHAZ thereby supporting YWHAZ chaperone-like activity. The protein is Heat shock protein beta-6 (Hspb6) of Mus musculus (Mouse).